We begin with the raw amino-acid sequence, 172 residues long: Conglutin-7 (172 aa).

An N-terminal signal peptide occupies residues Met-1–Ala-21. Cystine bridges form between Cys-33/Cys-116, Cys-45/Cys-103, Cys-104/Cys-152, and Cys-118/Cys-160. Residues Gln-54 to Gln-98 are disordered. Positions Arg-62 to Gln-76 are enriched in low complexity. 4-hydroxyproline occurs at positions 67, 74, and 86. Positions Asp-77 to Gln-98 are enriched in basic and acidic residues.

This sequence belongs to the 2S seed storage albumins family. The hydroxyproline modifications determined by mass spectrometry are probably 4-hydroxyproline as determined for other extracellular plant proteins. In terms of tissue distribution, expressed in seeds, not expressed in leaves, roots and pegs.

Weak inhibitor of trypsin. This chain is Conglutin-7, found in Arachis hypogaea (Peanut).